We begin with the raw amino-acid sequence, 84 residues long: Acyl carrier protein (84 aa).

The 76-residue stretch at Glu-6–Thr-81 folds into the Carrier domain. Ser-41 carries the O-(pantetheine 4'-phosphoryl)serine modification.

This sequence belongs to the acyl carrier protein (ACP) family. 4'-phosphopantetheine is transferred from CoA to a specific serine of apo-ACP by AcpS. This modification is essential for activity because fatty acids are bound in thioester linkage to the sulfhydryl of the prosthetic group.

The protein localises to the cytoplasm. The protein operates within lipid metabolism; fatty acid biosynthesis. Carrier of the growing fatty acid chain in fatty acid biosynthesis. The protein is Acyl carrier protein of Acidothermus cellulolyticus (strain ATCC 43068 / DSM 8971 / 11B).